A 950-amino-acid chain; its full sequence is Translation initiation factor IF-2 (950 aa).

2 disordered regions span residues 69 to 92 and 128 to 352; these read KTKT…AGKA and KPKV…SNVP. Basic and acidic residues-rich tracts occupy residues 77–86, 128–158, 165–186, 200–234, and 291–312; these read AKSKQEDHPR, KPKV…EAKA, AEVK…EKKK, KRAE…DNRR, and NRRD…DGNR. Polar residues-rich tracts occupy residues 322-336 and 343-352; these read NRNQ…NWNQ and YQNNQSSNVP. In terms of domain architecture, tr-type G spans 448–619; that stretch reads ERPAVVTIMG…LLVAEVQELK (172 aa). Residues 457 to 464 form a G1 region; the sequence is GHVDHGKT. 457–464 is a binding site for GTP; the sequence is GHVDHGKT. Positions 482 to 486 are G2; that stretch reads GITQH. The segment at 503–506 is G3; the sequence is DTPG. GTP is bound by residues 503–507 and 557–560; these read DTPGH and NKID. A G4 region spans residues 557–560; sequence NKID. The tract at residues 595–597 is G5; sequence SAK.

This sequence belongs to the TRAFAC class translation factor GTPase superfamily. Classic translation factor GTPase family. IF-2 subfamily.

The protein localises to the cytoplasm. Functionally, one of the essential components for the initiation of protein synthesis. Protects formylmethionyl-tRNA from spontaneous hydrolysis and promotes its binding to the 30S ribosomal subunits. Also involved in the hydrolysis of GTP during the formation of the 70S ribosomal complex. This Lactococcus lactis subsp. cremoris (strain SK11) protein is Translation initiation factor IF-2.